The sequence spans 251 residues: Isoprenyl transferase (251 aa).

Residue aspartate 24 is part of the active site. A Mg(2+)-binding site is contributed by aspartate 24. Substrate contacts are provided by residues 25 to 28 (GNGR), tryptophan 29, arginine 37, histidine 41, and 69 to 71 (STE). The Proton acceptor role is filled by asparagine 72. Residues tryptophan 73, arginine 75, arginine 186, and 192–194 (RIS) each bind substrate. Glutamate 205 contacts Mg(2+).

It belongs to the UPP synthase family. In terms of assembly, homodimer. The cofactor is Mg(2+).

Functionally, catalyzes the condensation of isopentenyl diphosphate (IPP) with allylic pyrophosphates generating different type of terpenoids. This Chromobacterium violaceum (strain ATCC 12472 / DSM 30191 / JCM 1249 / CCUG 213 / NBRC 12614 / NCIMB 9131 / NCTC 9757 / MK) protein is Isoprenyl transferase.